The chain runs to 385 residues: Chaperone protein DnaJ (385 aa).

Residues 5 to 70 (DYYEVLGVAK…QKRAAYDRFG (66 aa)) form the J domain. The segment at 141–219 (GKTETIRIPT…CSGAGRVNRE (79 aa)) adopts a CR-type zinc-finger fold. The Zn(2+) site is built by Cys154, Cys157, Cys171, Cys174, Cys193, Cys196, Cys207, and Cys210. CXXCXGXG motif repeat units follow at residues 154 to 161 (CETCSGTG), 171 to 178 (CSTCGGYG), 193 to 200 (CPNCHGRG), and 207 to 214 (CTACSGAG).

This sequence belongs to the DnaJ family. As to quaternary structure, homodimer. The cofactor is Zn(2+).

The protein resides in the cytoplasm. Participates actively in the response to hyperosmotic and heat shock by preventing the aggregation of stress-denatured proteins and by disaggregating proteins, also in an autonomous, DnaK-independent fashion. Unfolded proteins bind initially to DnaJ; upon interaction with the DnaJ-bound protein, DnaK hydrolyzes its bound ATP, resulting in the formation of a stable complex. GrpE releases ADP from DnaK; ATP binding to DnaK triggers the release of the substrate protein, thus completing the reaction cycle. Several rounds of ATP-dependent interactions between DnaJ, DnaK and GrpE are required for fully efficient folding. Also involved, together with DnaK and GrpE, in the DNA replication of plasmids through activation of initiation proteins. This chain is Chaperone protein DnaJ, found in Methylorubrum extorquens (strain PA1) (Methylobacterium extorquens).